A 148-amino-acid polypeptide reads, in one-letter code: MNRSELNDIIKNIVEDNGCDLYDIELSEEGGHKYFRVYITKPGGVSLNDCAKINNLISPIFDIEDPVEGKYFLEVSSPGLERKLTKPEHFEKSIGEKVKVTTNDGTKLKGELKSFIDNVAEIGKEKVNFDDIKKAKTYIEWNTYKYEE.

Belongs to the RimP family.

Its subcellular location is the cytoplasm. Required for maturation of 30S ribosomal subunits. In Nautilia profundicola (strain ATCC BAA-1463 / DSM 18972 / AmH), this protein is Ribosome maturation factor RimP.